A 109-amino-acid polypeptide reads, in one-letter code: Class I hydrophobin dewE (109 aa).

A signal peptide spans 1–20; that stretch reads MKVATALSVLAVAGSALASA. 4 cysteine pairs are disulfide-bonded: C34–C87, C40–C81, C41–C74, and C88–C102.

It belongs to the fungal hydrophobin family. Self-assembles to form functional amyloid fibrils called rodlets. Self-assembly into fibrillar rodlets occurs spontaneously at hydrophobic:hydrophilic interfaces and the rodlets further associate laterally to form amphipathic monolayers.

The protein resides in the secreted. Its subcellular location is the spore wall. Functionally, aerial growth, conidiation, and dispersal of filamentous fungi in the environment rely upon a capability of their secreting small amphipathic proteins called hydrophobins (HPBs) with low sequence identity. Class I can self-assemble into an outermost layer of rodlet bundles on aerial cell surfaces, conferring cellular hydrophobicity that supports fungal growth, development and dispersal; whereas Class II form highly ordered films at water-air interfaces through intermolecular interactions but contribute nothing to the rodlet structure. DewE is a class I hydrophobin that contributes to the hydrophobicity of the spore surface. The protein is Class I hydrophobin dewE of Emericella nidulans (strain FGSC A4 / ATCC 38163 / CBS 112.46 / NRRL 194 / M139) (Aspergillus nidulans).